A 669-amino-acid chain; its full sequence is Phosphatidylinositol-3-phosphate phosphatase MTMR1 (669 aa).

Position 1 is an N-acetylmethionine (methionine 1). The span at methionine 1–glutamate 17 shows a compositional bias: low complexity. The segment at methionine 1–threonine 55 is disordered. 2 positions are modified to phosphoserine: serine 47 and serine 53. One can recognise a GRAM domain in the interval asparagine 94–glycine 165. One can recognise a Myotubularin phosphatase domain in the interval glycine 230–tyrosine 605. Residues asparagine 355, asparagine 380, and isoleucine 381 each coordinate a 1,2-diacyl-sn-glycero-3-phospho-(1D-myo-inositol-3-phosphate). The Phosphocysteine intermediate role is filled by cysteine 442. Residues serine 443, aspartate 444, glycine 445, tryptophan 446, aspartate 447, arginine 448, and arginine 488 each coordinate a 1,2-diacyl-sn-glycero-3-phospho-(1D-myo-inositol-3-phosphate). Position 443 (serine 443) interacts with phosphate. Glycine 445, tryptophan 446, aspartate 447, and arginine 448 together coordinate phosphate. The segment at methionine 612–valine 669 is required for dimerization. The interval alanine 644–valine 669 is disordered. The segment covering serine 649–serine 661 has biased composition (low complexity).

The protein belongs to the protein-tyrosine phosphatase family. Non-receptor class myotubularin subfamily. Homodimer. In terms of tissue distribution, widely expressed. Detected in skeletal muscle, heart, lung, liver and brain.

It is found in the cell membrane. It localises to the cytoplasm. It carries out the reaction a 1,2-diacyl-sn-glycero-3-phospho-(1D-myo-inositol-3-phosphate) + H2O = a 1,2-diacyl-sn-glycero-3-phospho-(1D-myo-inositol) + phosphate. It catalyses the reaction 1,2-dioctanoyl-sn-glycero-3-phospho-(1-D-myo-inositol-3-phosphate) + H2O = 1,2-dioctanoyl-sn-glycero-3-phospho-(1D-myo-inositol) + phosphate. The catalysed reaction is a 1,2-diacyl-sn-glycero-3-phospho-(1D-myo-inositol-3,5-bisphosphate) + H2O = a 1,2-diacyl-sn-glycero-3-phospho-(1D-myo-inositol-5-phosphate) + phosphate. Its function is as follows. Lipid phosphatase that specifically dephosphorylates the D-3 position of phosphatidylinositol 3-phosphate, generating phosphatidylinositol. Could also dephosphorylate phosphatidylinositol 3,5-bisphosphate to produce phosphatidylinositol 5-phosphate. The sequence is that of Phosphatidylinositol-3-phosphate phosphatase MTMR1 from Mus musculus (Mouse).